The chain runs to 594 residues: MRVSRLMLVTLRDVPADAEIPSHQLLVRGGYIRRIGSGIYAYLPMMWKVLRKINAIVRAELNHLGALETLLPQLQPADLWERSGRWQGYTEGEGIMFHLEDRQNRQLGLGPTHEEVITELAGDLLRSYRQLPVTLYQIQTKFRDEIRPRFGLMRGREFIMKDAYSFHANQEDLENTYQAMATAYARIFERCGLEAVAVDADSGAIGGAASQEYMVTAAAGEDLILTSSDGLYAANQEKATSRPPVALPLAAGEERMIETPDQSSIEQLCAANGLDPTQTVKVLVLLARLDDGREQPTLVSLRGDQDLNEVKLANAVSRSLNAAVLEIRPISENQLCQQDLSEFPFGAIGPDLSDTALKGCRSWENHFLRLADATALDLPRFVCGANSKDQHCWGRTWDAMPAQIKADLRTARAGDQCVHDPSQTLSECRGIEVGHIFQLGRKYSEALDARFTNSAGQQEALLMGCYGIGISRLAQAAVEQHHDEAGISWPLGIAPFQVIVVIAKIQDPTQVALAEELYQSFLDAGIDALLDDRDERAGVKFKDADLIGIPWRIVVGRDAGEGKVEVVERSTRCSTSVPHQEAFQQVKDSISTHL.

This sequence belongs to the class-II aminoacyl-tRNA synthetase family. ProS type 1 subfamily. In terms of assembly, homodimer.

The protein resides in the cytoplasm. It catalyses the reaction tRNA(Pro) + L-proline + ATP = L-prolyl-tRNA(Pro) + AMP + diphosphate. In terms of biological role, catalyzes the attachment of proline to tRNA(Pro) in a two-step reaction: proline is first activated by ATP to form Pro-AMP and then transferred to the acceptor end of tRNA(Pro). As ProRS can inadvertently accommodate and process non-cognate amino acids such as alanine and cysteine, to avoid such errors it has two additional distinct editing activities against alanine. One activity is designated as 'pretransfer' editing and involves the tRNA(Pro)-independent hydrolysis of activated Ala-AMP. The other activity is designated 'posttransfer' editing and involves deacylation of mischarged Ala-tRNA(Pro). The misacylated Cys-tRNA(Pro) is not edited by ProRS. This is Proline--tRNA ligase from Synechococcus sp. (strain WH7803).